Reading from the N-terminus, the 327-residue chain is 2-methoxy-6-polyprenyl-1,4-benzoquinol methylase, mitochondrial (327 aa).

The N-terminal 49 residues, 1–49 (MAAPRSCALWSYCGRGWSWAMRGCQLLGLRSSWPGAPLSARLLPQEKRA), are a transit peptide targeting the mitochondrion. S-adenosyl-L-methionine is bound by residues Thr117, Asp171, and 199-200 (DA).

The protein belongs to the class I-like SAM-binding methyltransferase superfamily. MenG/UbiE family. In terms of assembly, component of a multi-subunit COQ enzyme complex, composed of at least COQ3, COQ4, COQ5, COQ6, COQ7 and COQ9. Interacts with PYURF; the interaction is direct, stabilizes COQ5 protein and associates PYURF with COQ enzyme complex.

The protein resides in the mitochondrion inner membrane. It carries out the reaction 2-methoxy-6-(all-trans-decaprenyl)benzene-1,4-diol + S-adenosyl-L-methionine = 5-methoxy-2-methyl-3-(all-trans-decaprenyl)benzene-1,4-diol + S-adenosyl-L-homocysteine + H(+). Its pathway is cofactor biosynthesis; ubiquinone biosynthesis. Functionally, methyltransferase required for the conversion of 2-decaprenyl-6-methoxy-1,4-benzoquinol (DDMQH2) to 2-decaprenyl-3-methyl-6-methoxy-1,4-benzoquinol (DMQH2). The sequence is that of 2-methoxy-6-polyprenyl-1,4-benzoquinol methylase, mitochondrial from Pongo abelii (Sumatran orangutan).